Reading from the N-terminus, the 1368-residue chain is MAP3K epsilon protein kinase 1 (1368 aa).

The Protein kinase domain maps to 20-274 (YMLGDEIGKG…AKTLLSHPWI (255 aa)). HEAT repeat units follow at residues 25–62 (EIGKGAYGRVYKGLDLENGDFVAIKQVSLENIVQEDLN) and 86–125 (SKTKTHLHIILEYVENGSLANIIKPNKFGPFPESLVAVYI). ATP is bound by residues 26-34 (IGKGAYGRV) and Lys-49. The active-site Proton acceptor is the Asp-144. One copy of the HEAT 3 repeat lies at 218–256 (PYYDLQPMPALFRIVQDDNPPIPDSLSPDITDFLRQCFK). 2 disordered regions span residues 296–415 (EATA…KNTS) and 430–507 (QTSH…PVAD). Positions 351 to 364 (LGEEGTDNSEDDIM) are enriched in acidic residues. Composition is skewed to basic and acidic residues over residues 388 to 399 (SDFHGKSERGET) and 470 to 486 (SLHDLFHPLDKVSEGKP). Residues 488–502 (EASTSMPTSNVNQGD) show a composition bias toward polar residues. HEAT repeat units lie at residues 533–571 (SNDGGDLFRLMMGVLKDDVIDIDGLVFDEKVPAENLFPL), 628–653 (IPKSRVICAVLQLINEIIKDNTDFQE), 654–695 (NACL…SSPL), 699–737 (MFIACRGIPVLVGFLEADYAKYREMVHLAIDGMWQVFKL), and 750–788 (AAKNGILLRLINTLYSLNEATRLASISGGLDGQAPRVRS). The interval 777 to 883 (GGLDGQAPRV…ISLSANRTST (107 aa)) is disordered. Residues 791–808 (LDPNNPIFGQNETSSLSM) show a composition bias toward polar residues. Composition is skewed to basic and acidic residues over residues 813 to 826 (DVLKTRHGGGEEPS) and 836 to 852 (SDVHQPDALHPDGDKPR). 9 HEAT repeats span residues 903 to 940 (EQVRPLLSLLDKEPPSRHYSGQLDYVKHITGIERHESR), 1025 to 1063 (ATSSGLLAHMVSTLSADVAREYLEKVADLLLEFARADTT), 1067 to 1105 (YMCSQSLLSRLFQMFNRVEPPILLKILECTNHLSTDPNC), 1112 to 1150 (ADAIKHLIPNLELKDGHLVYQIHHEVLSALFNLCKINKR), 1154 to 1191 (QAAENGIIPHLMLFIMSDSPLKQYALPLLCDMAHASRN), 1196 to 1234 (LRAHGGLDVYLSLLDDEYWSVIALDSIAVCLAQDNDNRK), 1258 to 1281 (RHFVHILEPFLKIITKSYRINKTL), 1282 to 1318 (AVNGLTPLLISRLDHQDAIARLNLLKLIKAVYEHHPR), and 1348 to 1368 (QVLVKQMATSLLKALHINTIL).

The protein belongs to the protein kinase superfamily. Ser/Thr protein kinase family. Interacts with SGP1. Post-translationally, autophosphorylated. In terms of tissue distribution, expressed in both the sporophytic and the gametophytic tissues, especially in dividing cells. Mostly present in flower buds and mature flowers. Also accumulates in embryos, in roots apices, trichomes and ovule integuments.

The protein localises to the cytoplasm. It is found in the cytoskeleton. The protein resides in the microtubule organizing center. Its subcellular location is the nucleus. It localises to the nucleolus. The protein localises to the cell membrane. The enzyme catalyses L-seryl-[protein] + ATP = O-phospho-L-seryl-[protein] + ADP + H(+). The catalysed reaction is L-threonyl-[protein] + ATP = O-phospho-L-threonyl-[protein] + ADP + H(+). In terms of biological role, serine/threonine-protein kinase involved in the spatial and temporal control system organizing cortical activities in mitotic and postmitotic cells. Required for the normal functioning of the plasma membrane in developing pollen. Involved in the regulation of cell expansion, cell elongation, and embryo development. This is MAP3K epsilon protein kinase 1 from Arabidopsis thaliana (Mouse-ear cress).